The sequence spans 50 residues: Small ribosomal subunit protein eS31 (50 aa).

Positions 22, 25, 40, and 43 each coordinate Zn(2+). The C4-type zinc finger occupies Cys22–Cys43.

The protein belongs to the eukaryotic ribosomal protein eS31 family. Part of the 30S ribosomal subunit. Zn(2+) is required as a cofactor.

This Pyrococcus horikoshii (strain ATCC 700860 / DSM 12428 / JCM 9974 / NBRC 100139 / OT-3) protein is Small ribosomal subunit protein eS31.